The sequence spans 151 residues: Peptide methionine sulfoxide reductase MsrB (151 aa).

One can recognise a MsrB domain in the interval 9-132; that stretch reads DGELKRTLTK…NSAALKFIPF (124 aa). The Nucleophile role is filled by Cys121.

Belongs to the MsrB Met sulfoxide reductase family.

The enzyme catalyses L-methionyl-[protein] + [thioredoxin]-disulfide + H2O = L-methionyl-(R)-S-oxide-[protein] + [thioredoxin]-dithiol. In Mycoplasma pneumoniae (strain ATCC 29342 / M129 / Subtype 1) (Mycoplasmoides pneumoniae), this protein is Peptide methionine sulfoxide reductase MsrB.